Consider the following 242-residue polypeptide: UPF0173 metal-dependent hydrolase Rxyl_1261 (242 aa).

Belongs to the UPF0173 family.

This is UPF0173 metal-dependent hydrolase Rxyl_1261 from Rubrobacter xylanophilus (strain DSM 9941 / JCM 11954 / NBRC 16129 / PRD-1).